A 5084-amino-acid polypeptide reads, in one-letter code: MAIKMIDKQVLACNLDAFAGRVTNSTDINEQAIEWLSPTPSAVTLEAAWCVTLRLYTGLDHLSFGSLTQDGIVATKLCNLGPHDTLEDVCSHVQLYDYSDDTVCHYNTAVIFKLDENEGKKLSELIPRGIDVALMVTGSNLGVLARASFMDADEARNLCQNFRHVLNCFQEPNQAVRGITLSDNDVNQILSWNKSQLTRTESLIHDQFARILQRQPDKSAIESWDGNMTYRELDAASSSLAESLSRANIGPGSWVLFCFNKSRWAIVSMLAILKAGGACVPLDPRHPKSRVVQILQATGAQHILVGDADNDIKNRLCNEFPSVKVIGVPHHEVCESQDIDTISLSFDSPAIGLFTSGSTGTPKGIVATHATICTGASSYAHHIGADDKTRVLQFASYTFDVCMVDVFTALLHGGTLCIPSEEERMTGLQEYISRTQPNWAALTPTVARVLDPALSSKSIRKILLVGEMVRESDIAEWLDSGVQVYNVYGPAENNLITTAAKAIRGRASNVGTGINTHTWVADVENERLVPIGAVGELICSGPHLTPGYLNDPERTASSFFEDLSWIPNMMDNKPFSRRFYRSGDLVRYCADGSLQCVGRLDSQVKLGGQRVELSEIESYIKSHNAAVLVPKAGSMKNKLIAVLEGAGSSGQSLGISSCDPGVAQQVEQVLRKNLPSYMCPSIWISVPHLPLSSSGKLDRKVLMNKLETLSHEEYLGLILDHAQDEDDQDGHETDNCQRLLREACSQVLNIPVERIAMSRAFAGHGGDSITAMQVSSLIKRTQTLVVTVKDLLTCHSLAEAASSMREVVTSIQVPTAHPGKLYPLSPIQRLFMATAPTSVTWNHYNQSVLLRIRERRSSDHVKESLGGVVRRHAMLRGRFQRVSSSEWMQRILPDDQGNLFFEYFPDASDYKQREALMLKARESLDIESGPLLRAQLFDGQVEQGMLLFIVSHHLVVDLVSWRVILEELEVSLAQPYGNTTDANDISALLLPQESVPFPVWSELQHEAAKNMDPDRVIPQQYAVPAPDFSYWGISSARNVYRDVIEKSISLGDMTTKNVLYECHEALQTEPVDIFLSAILLSFKRAFPERPIPPIFNEGHGREPWTSDLDISRTVGWFTTMFPIYVPNISAGDVVDTVRRVKDFRKGCAENGFQYFSTKYLHEQGRKTFKDHIPAEIMFNYEGRYQSLEKEKSLLMAEAWEAGEALSDSAPELQRFCLFELSAAVLTDGEIHFTMAWNSRARYQERISLWLTRLLPAVIDEIVTYLMLEKRQYTLSDLSQARLSDYSDLETLMASVSTIPGIDSIEGVEEIYCGSPMQDSLALSQSRISGGVYEIDLTWEVTDGRQGNYQVDVNRLVLAWNDVVARHAALRTVFLEAASSSNDVMLHQVVLRKYRPSTILMHTRDSSQALKQLSSCASYKKRGILIDKRPPHALAICSTDEGRTFVRFQVNHILFDGTSIAPLLRDLSRAYRNSHEVRREWTWNPFANFIRYIRDEKRRSDDLAYWKSYLATARPCQFPTLKHEESIEAPGTEQQRGAVQVCMSDKPSSLRNFLADMGVTVPTLVQLVWALVLRMYTSDSQVAFGYLASGRDAPVVDIEQAVGPFISILVHFLDFDNEGQLPIADMLQRIQDRSARSISHQSRSLAEIQDAIGLTGSSLLFNTGISFMPKWTKDMQLRNGSGLIFDQIAANDPTEFDISLIVETGDDGVDGMCIYVDYRTSTVGRMHAINIAASFDHILSQIIQDPSVPLNDVSGISTRDFDQISNWNRLLSPPKDKCLHDLFIEKVIEDPTREAVFSWDGSMSYGELHDLSARLANYLVHLGVGPEQMIPICFEKSVWTVVTILAVLKAGGCFVLLDPTHPASRLWNIVGEIEASILLCSPLTNRSKKLDASPDMNARKAAIIEIHPSFVNNLKSVSRESQHTPLCPSLSPDNAAYVVFTSGSTGIPKGVVVTHRAVVTGLDELGRAAGMTAMGSGTRTLQFASYSFDASIADIFCALQLGGCVCVMSDEGRSPADITDFIQRSRATYAGITPSFASLLDPRLVPSLRVLCFSGEALPASQIEAWSGYVKMVNMYGPTEASIACIANSEVTRTTDASNIGRAFRGSTWIVDENDHNQLRAIGSSGELLIEGPILAREYLKRPEQTAQAFISNPPWLQNIRPNSRLYKTGDMVRYNTNGTISYIGRKDNQIKINGQRVEVSEIEETLRASIEPEAGLITVELLDRKALGEADVLTAFVYIAGHDPSSTRDDKADNKKPFTIPDNPLLLEYFRSMLPRLESSSSKMPRYMVPQAYIPIDSLPLTTSGKVDRRALRHAAAQLNRNQLFSFASSLDMVHEPSVDVVKDDPVSELAHLWESVLNVRVSGTQSNFFRLGGNSMAAMNLRSQARKAGFQLSVADILANPTLSDMAKGMAPLSLTAPESTSSSSPQSFSTSTSTTIIENDPDTSPFSLLRTRGIALNEGLWQQMFDNADILWSEVEDIFPCTPMQEGLMVLSAHREGHGAYALHAPYKLPSDLDLAKLQFAWEQTTMVHAILRSRIVTHSQGALIVLQKSPVVVQQSTCSTLDDHLEEQRRLIFGYGVPLFRMTMVFDQIAQCHYFVMSIHHALFDGWSFSRMWDTALAIYQGRQLSRDIPSFQSFVQHLGAAPLSASKEYWKSHLVEQDRDGFQFPAVPSTHKPIATASASFEFAFQSTIAMSAGVTPSTMVHAAWAILLSQYTASSTVNFGVTLSGRDFPMPGLDQVVGATIVTLPRQLNINLNQNVIEFLEYVQQEAANVIPHQYLGIHEIRALGLEAQQACNFSTLILVNHNTVDLDSPLSVFGITQVPVDSVDFHPYPLAVEFTVQPESLVVNVCYDPVCIGGSMVESVMQQYDHVLQSLSEGLMCSSGLSGTNLASIMTGIAPAHLQKMLDWNKDGHRYGASRQTHLVLDHIGLNTRNNPRARAVVADDSTLSYAELNRLARVVSHRITQLDISGEFIAVCFDKSAAAIVSMLAVLQTGFAFMPISASQPPARLENLLTAANVQVVLTSPAHTDLLSGLSSHRRIVPVDLKDIDQHEQMQLNRSGSAVDKSRAAYLLYTSGTTGQPKGVVVQHGAWSKAIASQIDFFGFTRDTKMLQFSNYTFDASIFEIFITLCSGGCLFVPSEHSRVNDLEGFIRTNELNTITLTPTVARVIRPGQLPCVRQCLFGGESLTQSDIFAWAQQGRRVTNCYGPTEACVFSCGRDIRLDATDTKVTNIGRPVGINAWIISSMSGSISPIGAPGELCLEGQMLARGYLNDPERTQLSFSNHLPNNIPGKKNSRTYRTGDMVCHEADGTLNFLGRRDGQIKLRGHRIDVGEIEHHIQHAMADDSTYHSSTVQVYWKDTRNKSDAELAALLRMDIQHKECVMGVPCSLLSMPGRADESPTASQLKFKLRRILPEHMTPNTFIAVQHFPTTASGKLDRSFAQRCVEYFVPYTQKEVNKNETWSSSEAIVREWWCSILGVNTDLICRHDNFFGLGGNSIYAIRLVGLARSNGHHLQYEDVFSSPVLADMASRLSRPEDSRVQSETRQPPEPFQLISESDLKSVMDDILPLYNINKDEVEDIYPCTPLQATLMAETARHRGVYILAESIQVPSSQMTLFQDAWLLMFKSYEILRTRIVLSHDQSHGEWQVVMKYQPLTWTEFPDAKSFIEFVYNTHDYGKPLVHLAILGGNGGRIKDTDHSVKVGLCVHHAAYDGWSLSNIWRTITKKLTSSSSYSVGPYTPFNTYIRHLTEQDPEKAKSYWKERFSGLSSASLIPRPQDPGHQSSATDTIQRNLDLPTLSDHLLGKTAIVAQAAWAITISHYTANSDTLCGTILSGREYAAASVPGVETIVGPTIATVPSRTTINYDSCVLDLITAVQKDNLNAVRFSHMGLEQISRLNLDCRQACKFDNLFWVQPDLDETPANSIIRDIINVRGFSSSPMVLEIQLPAEGQKVVVNMSFDRVAVSNQQAELIVDTYITIMDNLLHAPLDTRLRSIAALSPAHISQISRVSSSPVEAVQACVHDLVRKQVELSPSHTAIDAWDGSMAYAALDALSTSLAEKLSGLGIGPESPVCILFEKSKWAIVAMLGVVKTGGCFVPLNPQSPIKRLQHLVESVDASIILVSPQYEELSISLSLHHVKILVISQDTIPSPISALKPSRAFPSSVGPQNAAYILFTSGSTGLPKGVVIEHQALCSSLTVLSSRVGLNSNSRVFQFNAYWFDVMLLDVFGTLISGGTICAPSESDCMDDLAGSINKFNANTIAALSTSVSRLIEPSSIPCLNTLGLGGEPVLSSDRDRWAPHVRLFSMYGPTETCIVSLMTDMTSTTPASLLGHPVGCRVWIVNPLKNDELAPLGGIGELFIEGPGLARYYLVDEDKTAAAFLSNQSWTIQDPSFQGSRRFYKTGDLVRINTDGTVSWIGRKDHSQVKIRGQRVELAEIEETIRQHIPSALTVAVDILIDGERRILAAVFGTNLMLPGLSDTEVEVYMEKLIKGLLPKLNGSLPKHMVPTAFIPLPFLPFLSTGKLDRKALHRLALPLAVELTKRTSTNRQALKTPKERLLSALWSEVLSTSKGEPAGPADNFFNAGGDSMMAMKLVAMARHRGLTLSVVDIFKNPILSDMADLLGPLRHEEEPSKEDSTHMLPIDTSSKLKDSLYEVLTVPPDRIEQIYPCTAYQEMFLSGTEVWPGAHVTQFIFSIDKGTDMHRLEKAMGRCTAEFPTLRTRIVRHGESGQLLQVVLHKGHEAPWSIHLTDDLDSALDQEKKDHWMHSGLSEPLHRLSLVMNNSGCTHLIWSLNHAAYDAWSFGMMLRSLGQDRANSTRHSRTCLPFNGLIRHISKLRDASSESRRFWRSYIADIGSQVLLFRYPSIADPRQDRLAVHQVSFPKHGGRSSTSLITAAWIMLLARLSHRKDITIAYLVTGRTLPLGGIDTCPGPLISKLPLRIQLLDEPRGLVDVADLVRIETVRVMPHEHTGLDAIKDLASQDDDDIHPHAASLLGRFPLDLAIHPAGHTDVDAARSIGITHIGQKVVVPPPGTFSAECSIISEDNYIAVSLAVIWDNRAMDEDDVNRVVEIWKDIIVRG.

Residues 209 to 606 (ARILQRQPDK…VGRLDSQVKL (398 aa)) are adenylation 1. The 78-residue stretch at 731–808 (HETDNCQRLL…EAASSMREVV (78 aa)) folds into the Carrier 1 domain. S768 bears the O-(pantetheine 4'-phosphoryl)serine mark. 2 condensation regions span residues 822-1124 (YPLS…FPIY) and 1309-1609 (EIYC…SILV). The tract at residues 1788-2192 (EDPTREAVFS…IGRKDNQIKI (405 aa)) is adenylation 2. The Carrier 2 domain maps to 2341–2415 (VVKDDPVSEL…DMAKGMAPLS (75 aa)). At S2376 the chain carries O-(pantetheine 4'-phosphoryl)serine. The segment at 2415–2441 (SLTAPESTSSSSPQSFSTSTSTTIIEN) is disordered. The segment covering 2421–2437 (STSSSSPQSFSTSTSTT) has biased composition (low complexity). A condensation 3 region spans residues 2478-2755 (EDIFPCTPMQ…IVTLPRQLNI (278 aa)). The segment at 2935 to 3328 (RNNPRARAVV…GRRDGQIKLR (394 aa)) is adenylation 3. The region spanning 3463–3539 (ETWSSSEAIV…DMASRLSRPE (77 aa)) is the Carrier 3 domain. S3500 is modified (O-(pantetheine 4'-phosphoryl)serine). The segment at 3581 to 3866 (EDIYPCTPLQ…IATVPSRTTI (286 aa)) is condensation 4. The tract at residues 4029–4426 (RKQVELSPSH…TVSWIGRKDH (398 aa)) is adenylation 4. A Carrier 4 domain is found at 4554–4631 (ALKTPKERLL…DMADLLGPLR (78 aa)). S4592 bears the O-(pantetheine 4'-phosphoryl)serine mark. Residues 4669-4948 (EQIYPCTAYQ…ISKLPLRIQL (280 aa)) are condensation 5.

This sequence belongs to the NRP synthetase family.

It functions in the pathway secondary metabolite biosynthesis. Functionally, non-ribosomal peptide synthetase; part of the gene cluster that mediates the biosynthesis of the cyclic tetrapeptide apicidin F (APF). The non-ribosomal peptide synthetase apf1 incorporates four different amino acids to produce apicidin F: L-phenylalanine, D-pipecolic acid (D-pip), N-methoxy-L-tryptophan and L-2-aminooctanedioic acid. L-Phenylalanine is the only proteinogenic amino acid directly used by apf1. The 3 other apf1 substrates are non-proteinogenic and have to be modified by other enzymes of the cluster. Lysine is converted to delta-1-pyrroline-5-carboxylate (P5C) which is reduced to L-pipecolic acid (L-pip) by apf3. L-pip is epimerized to D-pip, probably by apf1 activity, prior to incorporation. L-Tryptophan is N-oxidyzed by one of the cytochrome P450 monooxygenases (apf7 or apf8), and further methylated at the hydroxy group by the O-methyltransferase apf6 to yield N-methoxy-L-tryptophan. The synthesis of the fourth apf1 substrate is more complex. The fatty acid synthase apf5 is involved in the synthesis of the octanoic acid backbone of L-2-aminooctanedioic acid by fixing one acetyl-CoA unit and three malonyl-CoA units. Then one of the cytochrome P450 monooxygenases (apf7 or apf8) may oxidize this backbone to 2-oxooctanoic acid. The aminotransferase apf4 is predicted to catalyze the exchange of the keto group with an amino group. The next step would be the oxidation of 2-aminooctanoic acid by one of the cytochrome P450 monooxygenases (apf7 or apf8). The last step is the oxidation of 2-amino-8-hydroxyoctanoic acid to 2-aminooctanedioic acid is catalyzed by the FAD-dependent monooxygenase apf9. The polypeptide is Apicidin F synthase (Gibberella fujikuroi (strain CBS 195.34 / IMI 58289 / NRRL A-6831) (Bakanae and foot rot disease fungus)).